The sequence spans 302 residues: Recombination-associated protein RdgC (302 aa).

This sequence belongs to the RdgC family.

The protein localises to the cytoplasm. Its subcellular location is the nucleoid. Functionally, may be involved in recombination. This Proteus mirabilis (strain HI4320) protein is Recombination-associated protein RdgC.